The primary structure comprises 288 residues: Diaminopimelate epimerase (288 aa).

2 residues coordinate substrate: Asn14 and Asn67. Catalysis depends on Cys76, which acts as the Proton donor. Substrate is bound by residues 77 to 78, Asn166, Asn199, and 217 to 218; these read GN and ER. The active-site Proton acceptor is the Cys226. Position 227-228 (227-228) interacts with substrate; the sequence is GT.

It belongs to the diaminopimelate epimerase family. As to quaternary structure, homodimer.

The protein localises to the cytoplasm. It catalyses the reaction (2S,6S)-2,6-diaminopimelate = meso-2,6-diaminopimelate. It participates in amino-acid biosynthesis; L-lysine biosynthesis via DAP pathway; DL-2,6-diaminopimelate from LL-2,6-diaminopimelate: step 1/1. Its function is as follows. Catalyzes the stereoinversion of LL-2,6-diaminopimelate (L,L-DAP) to meso-diaminopimelate (meso-DAP), a precursor of L-lysine and an essential component of the bacterial peptidoglycan. This chain is Diaminopimelate epimerase, found in Bacillus cereus (strain ATCC 10987 / NRS 248).